We begin with the raw amino-acid sequence, 423 residues long: MFYDEAKIYVKGGDGGNGIVAFRREKYVPRGGPNGGDGGRGGSVILEADAGLRTLVDFRYRAHYRAERGQHGQGKNKHGRSAPDLILRVPVGVVVRDATSGQVLADLVEDGQRVVVAAGGRGGRGNARFVTSTDRAPTFAEKGEPGEERWLVLELKLLADVGLIGLPNAGKSTLLARISAARPKIADYPFTTLTPNLGVVRLEDGDSFVVADIPGLIAGAHQGAGLGLKFLRHIERTRVLVHVLDTSQPGEDVLAGWRTVNDELAHYNPELARRPQVVAANKMDIPGGEEKVAFLRERLGDSYRIFPISAATGEGVQELLYHVSGLLATLPPPAPVTAPEEEKVTALAPEELTIEREGQVFIVKNPDVERRVAMTYLDNEEAVRRLQVYLKQKGVDDALRRAGAATGAIIRIGKFEFEYVEEP.

The Obg domain maps to 1–158; it reads MFYDEAKIYV…RWLVLELKLL (158 aa). Positions 159-328 constitute an OBG-type G domain; that stretch reads ADVGLIGLPN…LLYHVSGLLA (170 aa). Residues 165–172, 190–194, 212–215, 281–284, and 309–311 contribute to the GTP site; these read GLPNAGKS, FTTLT, DIPG, NKMD, and SAA. Mg(2+) is bound by residues S172 and T192. Positions 336–421 constitute an OCT domain; the sequence is VTAPEEEKVT…IGKFEFEYVE (86 aa).

It belongs to the TRAFAC class OBG-HflX-like GTPase superfamily. OBG GTPase family. In terms of assembly, monomer. Requires Mg(2+) as cofactor.

The protein localises to the cytoplasm. In terms of biological role, an essential GTPase which binds GTP, GDP and possibly (p)ppGpp with moderate affinity, with high nucleotide exchange rates and a fairly low GTP hydrolysis rate. Plays a role in control of the cell cycle, stress response, ribosome biogenesis and in those bacteria that undergo differentiation, in morphogenesis control. The protein is GTPase Obg of Moorella thermoacetica (strain ATCC 39073 / JCM 9320).